A 138-amino-acid chain; its full sequence is Large ribosomal subunit protein uL16 (138 aa).

A compositionally biased stretch (basic residues) spans 1 to 13 (MLQPSRRKYRKEQ). Residues 1–22 (MLQPSRRKYRKEQKGRNTGLAT) are disordered.

The protein belongs to the universal ribosomal protein uL16 family. In terms of assembly, part of the 50S ribosomal subunit.

Binds 23S rRNA and is also seen to make contacts with the A and possibly P site tRNAs. This chain is Large ribosomal subunit protein uL16, found in Bordetella petrii (strain ATCC BAA-461 / DSM 12804 / CCUG 43448).